The following is a 302-amino-acid chain: Protoheme IX farnesyltransferase (302 aa).

9 consecutive transmembrane segments (helical) span residues 27-47 (VLTLVVFTGWCGLLAAPQSIH), 48-68 (PVLGFTAVLCIALGAGAAGAL), 97-117 (SALHFGVGLGIFSVLLMGLAL), 119-139 (VLAAAILAVSILFYVVVYTIW), 148-168 (IVIGGAAGAFPALIGWAAATG), 176-196 (LLFALVFLWTPPHFWALALFI), 219-239 (IQIMLYTVPMVIAAVAPWAMG), 240-260 (LTGAIYGIGASLLSALFLLLA), and 280-300 (LFGFSILYLFLIFGLVVADKV).

The protein belongs to the UbiA prenyltransferase family. Protoheme IX farnesyltransferase subfamily.

Its subcellular location is the cell inner membrane. It catalyses the reaction heme b + (2E,6E)-farnesyl diphosphate + H2O = Fe(II)-heme o + diphosphate. It functions in the pathway porphyrin-containing compound metabolism; heme O biosynthesis; heme O from protoheme: step 1/1. Converts heme B (protoheme IX) to heme O by substitution of the vinyl group on carbon 2 of heme B porphyrin ring with a hydroxyethyl farnesyl side group. In Rhizorhabdus wittichii (strain DSM 6014 / CCUG 31198 / JCM 15750 / NBRC 105917 / EY 4224 / RW1) (Sphingomonas wittichii), this protein is Protoheme IX farnesyltransferase.